A 116-amino-acid polypeptide reads, in one-letter code: MKGLRSLAATTLALFLVFVFLGNSSCAPQRLLERRNWTPQAMLYLKGAQGRRFISDQSRRKDLSDRPLPERRSPNPQLLTIPEAATILLASLQKSPEDEEKNFDQTRFLEDSLLNW.

Residues 1–26 (MKGLRSLAATTLALFLVFVFLGNSSC) form the signal peptide. The propeptide occupies 27-35 (APQRLLERR). Glutamine amide is present on Gln-49. Propeptides lie at residues 50 to 116 (GRRF…LLNW) and 74 to 116 (PNPQ…LLNW). The span at 55–73 (SDQSRRKDLSDRPLPERRS) shows a compositional bias: basic and acidic residues. The interval 55 to 77 (SDQSRRKDLSDRPLPERRSPNPQ) is disordered.

Belongs to the spexin family. In terms of tissue distribution, expressed in the type I glomic cells within the carotid body (at protein level). Expressed predominantly in pancreas, testis, kidney, brain and placenta. Expressed in submucosal layer of esophagus and stomach fundus.

It localises to the secreted. Its subcellular location is the extracellular space. The protein localises to the cytoplasmic vesicle. It is found in the secretory vesicle. Functionally, plays a role as a central modulator of cardiovascular and renal function and nociception. Also plays a role in energy metabolism and storage. Inhibits adrenocortical cell proliferation with minor stimulation on corticosteroid release. Acts as a ligand for galanin receptors GALR2 and GALR3. Intracerebroventricular administration of the peptide induces an increase in arterial blood pressure, a decrease in both heart rate and renal excretion and delayed natriuresis. Intraventricular administration of the peptide induces antinociceptive activity. Also induces contraction of muscarinic-like stomach smooth muscles. Intraperitoneal administration of the peptide induces a reduction in food consumption and body weight. Inhibits long chain fatty acid uptake into adipocytes. In terms of biological role, intracerebroventricular administration of the peptide induces a decrease in heart rate, but no change in arterial pressure, and an increase in urine flow rate. Intraventricular administration of the peptide induces antinociceptive activity. The protein is Spexin (SPX) of Homo sapiens (Human).